We begin with the raw amino-acid sequence, 342 residues long: Isopentenyl-diphosphate delta-isomerase (342 aa).

A substrate-binding site is contributed by 11–12 (RK). Residues Ser68, 69–71 (SMT), Ser99, and Asn128 each bind FMN. 99–101 (SQR) is a substrate binding site. Substrate is bound at residue Gln162. Glu163 is a Mg(2+) binding site. FMN-binding positions include Lys194, Ser219, Thr224, 275-277 (GVR), and 296-297 (AK).

The protein belongs to the IPP isomerase type 2 family. Homooctamer. Dimer of tetramers. FMN serves as cofactor. NADPH is required as a cofactor. It depends on Mg(2+) as a cofactor.

The protein localises to the cytoplasm. It catalyses the reaction isopentenyl diphosphate = dimethylallyl diphosphate. Functionally, involved in the biosynthesis of isoprenoids. Catalyzes the 1,3-allylic rearrangement of the homoallylic substrate isopentenyl (IPP) to its allylic isomer, dimethylallyl diphosphate (DMAPP). The sequence is that of Isopentenyl-diphosphate delta-isomerase from Legionella pneumophila subsp. pneumophila (strain Philadelphia 1 / ATCC 33152 / DSM 7513).